We begin with the raw amino-acid sequence, 576 residues long: (+)-alpha-terpineol synthase (576 aa).

(2E)-geranyl diphosphate is bound by residues R286, D323, D327, R466, and N469. 2 residues coordinate Mg(2+): D323 and D327. A DDXXD motif motif is present at residues 323 to 327 (DDVYD). The Mg(2+) site is built by N469, T473, and E477.

This sequence belongs to the terpene synthase family. Tpsb subfamily. It depends on Mg(2+) as a cofactor. The cofactor is Mn(2+).

The enzyme catalyses (2E,6E)-farnesyl diphosphate = beta-bisabolene + diphosphate. It carries out the reaction (2E)-geranyl diphosphate + H2O = (R)-alpha-terpineol + diphosphate. The catalysed reaction is (2E)-geranyl diphosphate = (4S)-limonene + diphosphate. Its pathway is secondary metabolite biosynthesis; terpenoid biosynthesis. Monoterpene synthase which catalyzes the conversion of (2E)-geranyl diphosphate (GPP) to (R)-alpha-terpineol and (4S)-limonene, as well as small quantities of linalool, myrcene, (-)-alpha-pinene, (+)-sabinene and geraniol. To a lower extent, catalyzes the conversion of (2E,6E)-farnesyl diphosphate (FPP) to beta-bisabolene. The protein is (+)-alpha-terpineol synthase of Santalum album (White sandalwood).